The primary structure comprises 475 residues: L-ornithine N(5)-monooxygenase (475 aa).

Residues 65 to 73 (ERQPEFGWH) and Gln-84 contribute to the FAD site. Lys-89 lines the substrate pocket. FAD is bound at residue Val-150. Residue 238–241 (GGQS) coordinates NADP(+). Substrate contacts are provided by residues 277 to 280 (NEIF) and Asn-307. 307–309 (NYG) serves as a coordination point for NADP(+). Residue 446–448 (SLL) coordinates FAD. Ser-449 is a binding site for substrate.

The protein belongs to the lysine N(6)-hydroxylase/L-ornithine N(5)-oxygenase family. As to quaternary structure, homotetramer. FAD is required as a cofactor.

The catalysed reaction is L-ornithine + NADPH + O2 = N(5)-hydroxy-L-ornithine + NADP(+) + H2O. It carries out the reaction L-ornithine + NADH + O2 = N(5)-hydroxy-L-ornithine + NAD(+) + H2O. Its pathway is siderophore biosynthesis. L-ornithine N(5)-monooxygenase; part of the gene cluster that mediates the biosynthesis of hydroxamate-containing siderophores that play a critical role in virulence via intracellular iron acquisition during macrophage infection. SID1 catalyzes the conversion of L-ornithine to N(5)-hydroxyornithine, the first step in the biosynthesis of all hydroxamate-containing siderophores. The chain is L-ornithine N(5)-monooxygenase from Ajellomyces capsulatus (Darling's disease fungus).